A 466-amino-acid chain; its full sequence is Proline--tRNA ligase (466 aa).

It belongs to the class-II aminoacyl-tRNA synthetase family. ProS type 3 subfamily. As to quaternary structure, homodimer.

The protein localises to the cytoplasm. It carries out the reaction tRNA(Pro) + L-proline + ATP = L-prolyl-tRNA(Pro) + AMP + diphosphate. In terms of biological role, catalyzes the attachment of proline to tRNA(Pro) in a two-step reaction: proline is first activated by ATP to form Pro-AMP and then transferred to the acceptor end of tRNA(Pro). The sequence is that of Proline--tRNA ligase from Picrophilus torridus (strain ATCC 700027 / DSM 9790 / JCM 10055 / NBRC 100828 / KAW 2/3).